A 166-amino-acid polypeptide reads, in one-letter code: NAD(P)H-quinone oxidoreductase subunit I, chloroplastic (166 aa).

2 4Fe-4S ferredoxin-type domains span residues 55–84 (GRIH…VDWK) and 95–124 (LNYS…MTEE). Positions 64, 67, 70, 74, 104, 107, 110, and 114 each coordinate [4Fe-4S] cluster.

It belongs to the complex I 23 kDa subunit family. In terms of assembly, NDH is composed of at least 16 different subunits, 5 of which are encoded in the nucleus. It depends on [4Fe-4S] cluster as a cofactor.

It localises to the plastid. The protein resides in the chloroplast thylakoid membrane. It catalyses the reaction a plastoquinone + NADH + (n+1) H(+)(in) = a plastoquinol + NAD(+) + n H(+)(out). The enzyme catalyses a plastoquinone + NADPH + (n+1) H(+)(in) = a plastoquinol + NADP(+) + n H(+)(out). NDH shuttles electrons from NAD(P)H:plastoquinone, via FMN and iron-sulfur (Fe-S) centers, to quinones in the photosynthetic chain and possibly in a chloroplast respiratory chain. The immediate electron acceptor for the enzyme in this species is believed to be plastoquinone. Couples the redox reaction to proton translocation, and thus conserves the redox energy in a proton gradient. This chain is NAD(P)H-quinone oxidoreductase subunit I, chloroplastic, found in Melampodium leucanthum (Black foot daisy).